The sequence spans 603 residues: Beta-glucuronidase (603 aa).

Positions 163 and 412 each coordinate D-glucuronate. Glu413 (proton donor) is an active-site residue. Residues Asn466, Tyr472, Glu504, Trp549, and Lys568 each contribute to the D-glucuronate site. Glu504 (nucleophile) is an active-site residue. The N-K motif motif lies at 566–568; the sequence is NKK.

This sequence belongs to the glycosyl hydrolase 2 family. Homotetramer.

The enzyme catalyses a beta-D-glucuronoside + H2O = D-glucuronate + an alcohol. It carries out the reaction 4-methylumbelliferone beta-D-glucuronate + H2O = 4-methylumbelliferone + D-glucuronate. With respect to regulation, potently inhibited by a set of synthetic compounds like thio-urea derivatives and analogs, and uronic isofagomine (UIFG) derivatives. Inhibitors of gut microbial beta-glucuronidases block the reactivation of glucuronidated cancer drugs, and thereby alleviate drug-induced GI toxicity. Functionally, displays beta-glucuronidase activity with the artificial substrate p-nitrophenyl-beta-D-glucuronide (PNPG) and with 4-methylumbelliferyl-glucuronide. Is likely capable of scavenging glucuronate from a range of chemically distinct xenobiotic and endobiotic glucuronides present in the gastrointestinal (GI) tract, to be able to utilize these diverse sources of carbon. As part of the GI microbiome, this enzyme is able to reactivate glucuronide drug conjugates, such reactivated compounds can significantly damage the GI tract. The polypeptide is Beta-glucuronidase (uidA) (Escherichia coli (strain K12)).